Consider the following 20-residue polypeptide: Cytolysin tenebrosin-A (20 aa).

A plays an important role in the hemolytic activity region spans residues 3–12; that stretch reads AVAGAVIEGA. The tract at residues 11 to 20 is N-terminal region; the sequence is GATLTFEVLQ.

This sequence belongs to the actinoporin family. Sea anemone subfamily. Octamer or nonamer in membranes. Monomer in the soluble state.

It localises to the secreted. Its subcellular location is the nematocyst. The protein localises to the target cell membrane. In terms of biological role, pore-forming protein that forms cations-selective hydrophilic pores of around 1 nm and causes cardiac stimulation and cytolysis. Pore formation is a multi-step process that involves specific recognition of membrane sphingomyelin (but neither cholesterol nor phosphatidylcholine) using aromatic rich region and adjacent phosphocholine (POC) binding site, firm binding to the membrane (mainly driven by hydrophobic interactions) accompanied by the transfer of the N-terminal region to the lipid-water interface and finally pore formation after oligomerization of monomers. The polypeptide is Cytolysin tenebrosin-A (Actinia tenebrosa (Australian red waratah sea anemone)).